The primary structure comprises 113 residues: MESLLNRLYDALGLDAPEDEPLLIIDDGIQVYFNESDHTLEMCCPFMPLPDDTLTLQHFLRLNYASAVTIGADADNTALVALYRLPQTSTEEEALTGFELFISNVKQLKEHYA.

The protein belongs to the IpgE/SigE chaperone family. In terms of assembly, homodimer or higher-order oligomers.

Its subcellular location is the cytoplasm. Functionally, molecular chaperone required for SopB/SigD stabilization and secretion. This is Chaperone protein SigE (sigE) from Salmonella typhi.